The following is a 354-amino-acid chain: MARRNPLLFAIVVTILFVVCYGSALIAQTPPPVDNFVASAHYGSFKKRHGKAFGGDAEEGHRFNAFKQNMQTAYFLNTQNPHAHYDVSGKFADLTPQEFAKLYLNPDYYARHLKNHKEDVHVDDSAPSGVMSVDWRDKGAVTPVKNQGLCGSCWAFSAIGNIEGQWAASGHSLVSLSEQMLVSCDNIDEGCNGGLMDQAMNWIMQSHNGSVFTEASYPYTSGGGTRPPCHDEGEVGAKITGFLSLPHDEERIAEWVEKRGPVAVAVDATTWQLYFGGVVSLCLAWSLNHGVLIVGFNKNAKPPYWIVKNSWGSSWGEKGYIRLAMGSNQCMLKNYPVSATVESPHTPHVPTTTA.

An N-terminal signal peptide occupies residues 1 to 24 (MARRNPLLFAIVVTILFVVCYGSA). Positions 25–125 (LIAQTPPPVD…HKEDVHVDDS (101 aa)) are cleaved as a propeptide — activation peptide. 3 disulfides stabilise this stretch: Cys150–Cys191, Cys184–Cys229, and Cys282–Cys330. Residue Cys153 is part of the active site. Asn208 carries an N-linked (GlcNAc...) asparagine glycan. Residues His289 and Asn309 contribute to the active site.

This sequence belongs to the peptidase C1 family.

This chain is Cysteine proteinase A (LMCPA), found in Leishmania mexicana.